A 326-amino-acid polypeptide reads, in one-letter code: GTP 3',8-cyclase (326 aa).

Residues 7-232 (GFGRSFPYLR…PRAADAGPAR (226 aa)) enclose the Radical SAM core domain. Position 16 (R16) interacts with GTP. 2 residues coordinate [4Fe-4S] cluster: C23 and C27. Y29 is an S-adenosyl-L-methionine binding site. C30 lines the [4Fe-4S] cluster pocket. GTP is bound at residue R65. G69 lines the S-adenosyl-L-methionine pocket. A GTP-binding site is contributed by T96. S120 contacts S-adenosyl-L-methionine. K157 serves as a coordination point for GTP. M191 contacts S-adenosyl-L-methionine. The [4Fe-4S] cluster site is built by C254 and C257. 259 to 261 (RLR) contacts GTP. C271 contributes to the [4Fe-4S] cluster binding site.

This sequence belongs to the radical SAM superfamily. MoaA family. Monomer and homodimer. [4Fe-4S] cluster is required as a cofactor.

The enzyme catalyses GTP + AH2 + S-adenosyl-L-methionine = (8S)-3',8-cyclo-7,8-dihydroguanosine 5'-triphosphate + 5'-deoxyadenosine + L-methionine + A + H(+). The protein operates within cofactor biosynthesis; molybdopterin biosynthesis. In terms of biological role, catalyzes the cyclization of GTP to (8S)-3',8-cyclo-7,8-dihydroguanosine 5'-triphosphate. The polypeptide is GTP 3',8-cyclase (Stenotrophomonas maltophilia (strain R551-3)).